A 281-amino-acid polypeptide reads, in one-letter code: MGIEFTKYHGLGNDFILIDNRHGSEPMVSPEMAVEMCDRHFGIGADGVIFVLPGTSQTDYQMRIFNSDGSEPEMCGNGIRCLAQFIAELEKTTEVGKSYRIDTLGGLMTPRLEAQEQVTVDMGLPRLLGSEIPTTLVSRTEKVIDQPIEVAGQSWLVTCVSMGNPHCITFVEDVKSIALETIGPQFEHHVAFPQRTNTEFIEVLRPDYLKMRVWERGAGITLACGTGACASVVAGVLTGKSDRRCTVELPGGCLSIYWSETDGHVYMTGPAKRVFTGVYEM.

2 residues coordinate substrate: asparagine 13 and asparagine 66. Cysteine 75 acts as the Proton donor in catalysis. Substrate-binding positions include 76–77 (GN), asparagine 164, asparagine 197, and 215–216 (ER). Catalysis depends on cysteine 224, which acts as the Proton acceptor. Position 225 to 226 (225 to 226 (GT)) interacts with substrate.

The protein belongs to the diaminopimelate epimerase family. Homodimer.

The protein resides in the cytoplasm. It carries out the reaction (2S,6S)-2,6-diaminopimelate = meso-2,6-diaminopimelate. It functions in the pathway amino-acid biosynthesis; L-lysine biosynthesis via DAP pathway; DL-2,6-diaminopimelate from LL-2,6-diaminopimelate: step 1/1. Catalyzes the stereoinversion of LL-2,6-diaminopimelate (L,L-DAP) to meso-diaminopimelate (meso-DAP), a precursor of L-lysine and an essential component of the bacterial peptidoglycan. The sequence is that of Diaminopimelate epimerase from Gloeothece citriformis (strain PCC 7424) (Cyanothece sp. (strain PCC 7424)).